The primary structure comprises 1262 residues: DNA-directed RNA polymerase subunit beta' (1262 aa).

Zn(2+) is bound by residues Cys220, Cys294, Cys301, and Cys304.

This sequence belongs to the RNA polymerase beta' chain family. RpoC2 subfamily. In terms of assembly, in cyanobacteria the RNAP catalytic core is composed of 2 alpha, 1 beta, 1 beta', 1 gamma and 1 omega subunit. When a sigma factor is associated with the core the holoenzyme is formed, which can initiate transcription. Zn(2+) serves as cofactor.

The catalysed reaction is RNA(n) + a ribonucleoside 5'-triphosphate = RNA(n+1) + diphosphate. Its function is as follows. DNA-dependent RNA polymerase catalyzes the transcription of DNA into RNA using the four ribonucleoside triphosphates as substrates. The chain is DNA-directed RNA polymerase subunit beta' from Gloeobacter violaceus (strain ATCC 29082 / PCC 7421).